The following is a 233-amino-acid chain: ATP-dependent Clp protease proteolytic subunit 1 (233 aa).

The active-site Nucleophile is the serine 116. Histidine 141 is an active-site residue.

This sequence belongs to the peptidase S14 family. Fourteen ClpP subunits assemble into 2 heptameric rings which stack back to back to give a disk-like structure with a central cavity, resembling the structure of eukaryotic proteasomes.

The protein resides in the cytoplasm. It carries out the reaction Hydrolysis of proteins to small peptides in the presence of ATP and magnesium. alpha-casein is the usual test substrate. In the absence of ATP, only oligopeptides shorter than five residues are hydrolyzed (such as succinyl-Leu-Tyr-|-NHMec, and Leu-Tyr-Leu-|-Tyr-Trp, in which cleavage of the -Tyr-|-Leu- and -Tyr-|-Trp bonds also occurs).. Functionally, cleaves peptides in various proteins in a process that requires ATP hydrolysis. Has a chymotrypsin-like activity. Plays a major role in the degradation of misfolded proteins. In Salinibacter ruber (strain DSM 13855 / M31), this protein is ATP-dependent Clp protease proteolytic subunit 1.